Here is a 229-residue protein sequence, read N- to C-terminus: MAGLINFEDEQEVKQFLDNLGVEYSYQCYREKDPEGCHRLADYLEGVKKNYESTAQVLQHNCEVNAHAQSCYKLGAYHVTGKGGMKKCLKTAYSCFLKSCNTQGKKSVDACHNVGLLAQDGRALETGPDTTVARQYFEKACEGGFAPSCFNLSTLYIQGFPGLDKSMPLALKYALKACDLGHVWGCANASRMYKLGDGTDKDEQRAEELKNRAKDLHGQEKERQLKFGE.

Sel1-like repeat units lie at residues 34-66 (PEGC…EVNA), 68-104 (AQSC…NTQG), 108-145 (VDAC…EGGF), 146-182 (APSC…DLGH), and 183-218 (VWGC…DLHG). The segment at 197–229 (DGTDKDEQRAEELKNRAKDLHGQEKERQLKFGE) is disordered.

This sequence belongs to the hcp beta-lactamase family.

The protein localises to the mitochondrion intermembrane space. Functionally, may be required for assembly of mitochondrial respiratory chain complexes. This is Cytochrome c oxidase assembly factor 7 (coa7) from Danio rerio (Zebrafish).